The chain runs to 151 residues: Chemokine-like factor (151 aa).

In terms of domain architecture, MARVEL spans 13–133 (FCLSLKCFVK…DCALMCQKLR (121 aa)). 4 helical membrane passes run 19–39 (CFVK…FIVA), 45–65 (YIVI…LYMC), 74–94 (FFWP…MLIV), and 107–127 (IMVG…DCAL). A glycan (N-linked (GlcNAc...) asparagine) is linked at Asn-142.

This sequence belongs to the chemokine-like factor family. Both isoforms have highest expression levels in testis with relatively lower expression level in liver, spleen, lung, brain and heart and barely detectable levels in skeletal muscle and kidney were barely detected. In most tissues, isoform CKLF2 has higher expression levels than isoform CKLF1.

The protein localises to the secreted. Its subcellular location is the membrane. Its function is as follows. May play an important role in inflammation and regeneration of skeletal muscle. Essential for embryonic development. Functionally, has chemotactic response in monocytes, neutrophils and lymphocytes. Binds CCR4. The chain is Chemokine-like factor (Cklf) from Rattus norvegicus (Rat).